Here is a 286-residue protein sequence, read N- to C-terminus: F-box/SPRY domain-containing protein 1 (286 aa).

An N-acetylalanine modification is found at alanine 2. Positions 33 to 82 constitute an F-box domain; that stretch reads SGVGGRLPSRVLELVFSYLELSELRSCALVCKHWYRCLHGDENSEVWRSL. Residues 92–284 form the B30.2/SPRY domain; that stretch reads LRTDILCNLP…VTLVYLGKPL (193 aa).

It belongs to the FBXO45/Fsn family. Forms a complex with MYCBP2 and SKP1. Interacts with HEY1; leading to FBXO45 nuclear translocation. Interacts (via SPRY domain) with CDH2. In terms of tissue distribution, expressed speciffically in the central nervous system, including cerebellum, medulla oblongata, olfactory bulb, hippocampus, cortex and brain stem.

It is found in the secreted. The protein localises to the postsynaptic cell membrane. The protein resides in the presynaptic cell membrane. It localises to the nucleus. It participates in protein modification; protein ubiquitination. In terms of biological role, component of E3 ubiquitin ligase complex consisting of FBXO45, MYCBP2 and SKP1. Functions in substrate recognition but plays also an important role in assembly of the complex. Required for normal neuromuscular synaptogenesis, axon pathfinding and neuronal migration. Regulates neuron migration during brain development through interaction with N-cadherin/CDH2 after secretion via a non-classical mechanism. Plays a role in the regulation of neurotransmission at mature neurons. May control synaptic activity by controlling UNC13A via ubiquitin dependent pathway. Specifically recognizes TP73, promoting its ubiquitination and degradation. Polyubiquitinates NMNAT2, an adenylyltransferase that acts as an axon maintenance factor, and regulates its stability and degradation by the proteasome. Acts also by ubiquitinating FBXW7 during prolonged mitotic arrest and promotes FBXW7 proteasomal degradation. Induces subsequently an increase in mitotic slippage and prevents mitotic cell death. In response to influenza infection, mediates interferon-lambda receptor IFNLR1 polyubiquitination and degradation through the ubiquitin-proteasome system by docking with its intracellular receptor domain. The chain is F-box/SPRY domain-containing protein 1 from Mus musculus (Mouse).